The sequence spans 254 residues: Winged helix repair factor 1 (254 aa).

The short motif at 4–21 (KRHHLIPETFGVKRRRKR) is the Bipartite nuclear localization signal element. Winged helix domain regions lie at residues 32 to 104 (EPGS…GIIF), 120 to 179 (PYAG…LAVP), and 180 to 254 (GAGR…LPET).

Belongs to the STK19 family. In terms of assembly, monomer in solution. Homodimer; when bound to DNA. Component of a transcription-coupled nucleotide excision repair (TC-NER) complex composed of STK19, ERCC6, ERCC8, DDA1, DDB1, ELOF1 and UVSSA which assembles and interacts with the multiprotein RNA polymerase II complex when it stalls at DNA lesions. Monocytes, hepatocytes, epithelial cells, T- and B-lymphocytes.

Its subcellular location is the nucleus. The protein localises to the cytoplasm. In terms of biological role, DNA-binding protein which is required for efficient transcription-coupled nucleotide excision repair (TC-NER). Acts as part of a TC-NER complex which assembles and interacts with RNA polymerase II (RNAPII) when it stalls at DNA lesions. TC-NER complex subunit UVSSA binds to the GTF2H1/p62 subunit of the TFIIH transcription factor complex, tethering TFIIH to the TC-NER complex. WHR1/STK19 then interacts with the XPD helicase subunit of TFIIH which guides TFIIH to DNA downstream of the stalled RNAPII, ensuring DNA repair. Directly interacts with RNAPII and also binds to downstream DNA. Promotes the timely removal of DNA damage-stalled RNAPII, allowing downstream NER factors to access DNA lesions. Required for monoubiquitination of UVSSA. Regulates repositioning and stabilization of UVSSA within the TC-NER complex. Stimulates ubiquitination of RNAPII complex member RBP1. Also binds to RNA and regulates the expression levels of many mRNAs. This Homo sapiens (Human) protein is Winged helix repair factor 1.